Consider the following 293-residue polypeptide: 4-hydroxy-tetrahydrodipicolinate synthase (293 aa).

Thr45 is a binding site for pyruvate. Tyr133 acts as the Proton donor/acceptor in catalysis. Lys161 (schiff-base intermediate with substrate) is an active-site residue. Ile203 is a binding site for pyruvate.

This sequence belongs to the DapA family. In terms of assembly, homotetramer; dimer of dimers.

It localises to the cytoplasm. It catalyses the reaction L-aspartate 4-semialdehyde + pyruvate = (2S,4S)-4-hydroxy-2,3,4,5-tetrahydrodipicolinate + H2O + H(+). It participates in amino-acid biosynthesis; L-lysine biosynthesis via DAP pathway; (S)-tetrahydrodipicolinate from L-aspartate: step 3/4. Functionally, catalyzes the condensation of (S)-aspartate-beta-semialdehyde [(S)-ASA] and pyruvate to 4-hydroxy-tetrahydrodipicolinate (HTPA). The chain is 4-hydroxy-tetrahydrodipicolinate synthase from Pseudoalteromonas atlantica (strain T6c / ATCC BAA-1087).